The primary structure comprises 287 residues: Pyridoxal kinase PdxY (287 aa).

Substrate is bound by residues S10 and T45 to Q46. ATP-binding positions include D112, A144, E149, K182, and R209–V212. D224 provides a ligand contact to substrate.

Belongs to the pyridoxine kinase family. PdxY subfamily. Homodimer. It depends on Mg(2+) as a cofactor.

It catalyses the reaction pyridoxal + ATP = pyridoxal 5'-phosphate + ADP + H(+). The protein operates within cofactor metabolism; pyridoxal 5'-phosphate salvage; pyridoxal 5'-phosphate from pyridoxal: step 1/1. Its function is as follows. Pyridoxal kinase involved in the salvage pathway of pyridoxal 5'-phosphate (PLP). Catalyzes the phosphorylation of pyridoxal to PLP. The protein is Pyridoxal kinase PdxY of Escherichia coli O6:H1 (strain CFT073 / ATCC 700928 / UPEC).